The chain runs to 198 residues: Superoxide dismutase [Fe] (198 aa).

Fe cation is bound by residues H27, H74, D157, and H161.

This sequence belongs to the iron/manganese superoxide dismutase family. In terms of assembly, homodimer. It depends on Fe cation as a cofactor.

It catalyses the reaction 2 superoxide + 2 H(+) = H2O2 + O2. Destroys superoxide anion radicals which are normally produced within the cells and which are toxic to biological systems. The protein is Superoxide dismutase [Fe] (sodB) of Pseudomonas putida (strain ATCC 47054 / DSM 6125 / CFBP 8728 / NCIMB 11950 / KT2440).